Consider the following 741-residue polypeptide: 1,4-alpha-glucan branching enzyme GlgB 2 (741 aa).

A disordered region spans residues 1-38 (MALRDTSIPEPSGPVPPAPGACATAPPLDPTDRGRLLA). Catalysis depends on Asp421, which acts as the Nucleophile. Glu474 acts as the Proton donor in catalysis.

It belongs to the glycosyl hydrolase 13 family. GlgB subfamily. Monomer.

It catalyses the reaction Transfers a segment of a (1-&gt;4)-alpha-D-glucan chain to a primary hydroxy group in a similar glucan chain.. The protein operates within glycan biosynthesis; glycogen biosynthesis. Functionally, catalyzes the formation of the alpha-1,6-glucosidic linkages in glycogen by scission of a 1,4-alpha-linked oligosaccharide from growing alpha-1,4-glucan chains and the subsequent attachment of the oligosaccharide to the alpha-1,6 position. This is 1,4-alpha-glucan branching enzyme GlgB 2 (glgB2) from Streptomyces coelicolor (strain ATCC BAA-471 / A3(2) / M145).